The primary structure comprises 233 residues: 2,3-bisphosphoglycerate-dependent phosphoglycerate mutase (233 aa).

Residues R8–N15, T21–G22, R60, E87–Y90, K98, R114–R115, and G183–N184 contribute to the substrate site. H9 functions as the Tele-phosphohistidine intermediate in the catalytic mechanism. Catalysis depends on E87, which acts as the Proton donor/acceptor.

The protein belongs to the phosphoglycerate mutase family. BPG-dependent PGAM subfamily.

It catalyses the reaction (2R)-2-phosphoglycerate = (2R)-3-phosphoglycerate. It functions in the pathway carbohydrate degradation; glycolysis; pyruvate from D-glyceraldehyde 3-phosphate: step 3/5. Its function is as follows. Catalyzes the interconversion of 2-phosphoglycerate and 3-phosphoglycerate. This Lactococcus lactis subsp. cremoris (strain MG1363) protein is 2,3-bisphosphoglycerate-dependent phosphoglycerate mutase.